Reading from the N-terminus, the 1139-residue chain is Phospholipid-transporting ATPase tat-1 (1139 aa).

The next 3 helical transmembrane spans lie at 78-98, 276-296, and 318-338; these read YTTAVPFLIILSVSALKEIFE, IIFLFFVLVALALISATGSEI, and SFLWGVLTFFILYNNLIPISL. The 4-aspartylphosphate intermediate role is filled by Asp-388. A run of 6 helical transmembrane segments spans residues 831–851, 855–875, 901–921, 935–955, 972–992, and 1013–1033; these read ICLYIIELWFAMFSAWSGQTI, WTIGMFNVIFTAWPPVVLGLF, IGNFSLWIGLAIVHSLSLFFL, GLTGGWLMLGNCAYTFVVATV, VACIGSIGLWIVFVIVYSLVF, and YTFWLALLFIPLATLLWDLVI.

The protein belongs to the cation transport ATPase (P-type) (TC 3.A.3) family. Type IV subfamily.

It localises to the cell membrane. The protein resides in the early endosome membrane. Its subcellular location is the recycling endosome membrane. It catalyses the reaction ATP + H2O + phospholipidSide 1 = ADP + phosphate + phospholipidSide 2.. The catalysed reaction is a 1,2-diacyl-sn-glycero-3-phospho-L-serine(out) + ATP + H2O = a 1,2-diacyl-sn-glycero-3-phospho-L-serine(in) + ADP + phosphate + H(+). Transports phosphatidylserine from the outer to the inner leaflet of the plasma membrane, thereby maintaining the enrichment of this phospholipid in the inner leaflet. Ectopic exposure of phosphatidylserine on the cell surface may result in removal of living cells by neighboring phagocytes. Regulation of the phosphatidylserine distribution in plasma membranes is likely to help in the maintenance and control of the membrane surface charge. Plays a role in the formation of the tubular membrane structure and in membrane trafficking and is specifically involved in the recycling and degradation of endocytic cargo, likely with its chaperone protein chat-1. This Caenorhabditis elegans protein is Phospholipid-transporting ATPase tat-1 (tat-1).